Consider the following 61-residue polypeptide: Small ribosomal subunit protein uS14 (61 aa).

Residues Cys24, Cys27, Cys40, and Cys43 each contribute to the Zn(2+) site.

Belongs to the universal ribosomal protein uS14 family. Zinc-binding uS14 subfamily. Part of the 30S ribosomal subunit. Contacts proteins S3 and S10. It depends on Zn(2+) as a cofactor.

Its function is as follows. Binds 16S rRNA, required for the assembly of 30S particles and may also be responsible for determining the conformation of the 16S rRNA at the A site. The protein is Small ribosomal subunit protein uS14 of Halothermothrix orenii (strain H 168 / OCM 544 / DSM 9562).